Here is a 403-residue protein sequence, read N- to C-terminus: Glucose/galactose-binding lipoprotein (403 aa).

Positions 1–25 are cleaved as a signal peptide; the sequence is MKENSCTACSRRLALFVGAAVLVVG. Residue C26 is the site of N-palmitoyl cysteine attachment. A lipid anchor (S-diacylglycerol cysteine) is attached at C26.

This sequence belongs to the bacterial solute-binding protein 2 family.

It localises to the cell membrane. May be involved in the transport of sugars. May have a role in chemotaxis. In Treponema pallidum (strain Nichols), this protein is Glucose/galactose-binding lipoprotein (mglB).